The primary structure comprises 101 residues: Putative defensin-like protein 253 (101 aa).

Residues 1 to 23 (MRFASLFVVYCTFMFLDISHVKC) form the signal peptide. Cystine bridges form between C31–C84, C41–C66, C49–C76, and C64–C78.

It belongs to the DEFL family.

It localises to the secreted. The protein is Putative defensin-like protein 253 (SCRL15) of Arabidopsis thaliana (Mouse-ear cress).